Here is a 331-residue protein sequence, read N- to C-terminus: Mitochondrial respiration co-chaperone MRJ1 (331 aa).

A mitochondrion-targeting transit peptide spans 1 to 36 (MLSFQATVRPLAVSSRLHSPAAHIWRRNAHTAAMSD). Residues 35 to 66 (SDDSLDQGSSSSYGDSASQPHLGKGKGRQDSL) are disordered. Positions 40–53 (DQGSSSSYGDSASQ) are enriched in low complexity. The J domain maps to 83–147 (DPFEVMALDR…SSRSAFLKTG (65 aa)). A disordered region spans residues 203 to 226 (DGSQGWRPYEDPSKGFSPPTSGPA). The region spanning 275-303 (RALAQARYEAATHGHIRREQIRRRVREAE) is the IQ domain.

The protein belongs to the DnaJ family. In terms of assembly, interacts with QCR2.

Its subcellular location is the mitochondrion. Its function is as follows. Mitochondrial co-chaperone required for ubiquinol-cytochrome c oxidoreductase (mitochondrial respiratory chain complex III) activity. The protein is Mitochondrial respiration co-chaperone MRJ1 of Cryptococcus neoformans var. grubii serotype A (strain H99 / ATCC 208821 / CBS 10515 / FGSC 9487) (Filobasidiella neoformans var. grubii).